The following is a 403-amino-acid chain: FAD-dependent monooxygenase tazP (403 aa).

FAD-binding residues include glycine 75, arginine 144, aspartate 354, and alanine 367.

It belongs to the paxM FAD-dependent monooxygenase family. The cofactor is FAD.

Its pathway is secondary metabolite biosynthesis. In terms of biological role, FAD-dependent monooxygenase; part of the gene cluster that mediates the biosynthesis of azaterrilone A and other azaphilones, a class of fungal metabolites characterized by a highly oxygenated pyrano-quinone bicyclic core and exhibiting a broad range of bioactivities. The first step of the pathway begins with the non-reducing polyketide synthase tazA that assembles one acetyl-CoA starter unit, five malonyl-CoA units, and catalyzes a series of Claisen condensations, methylation, PT-mediated cyclization, and finally releases the first hexaketide precursor through the R-domain. The tazA product then undergoes reduction on its terminal ketone and the following pyran-ring formation by yet undetermined enzyme(s). Dehydration and enoyl reduction, possibly involving the trans-enoyl reductase tazE leads to the next intermediate. TazD is predicted as an acetyltransferase and might catalyze the acetylation steps leading to the synthesis of azaterrilone A. Azaterrilone A is not the final product of the taz pathway and both the highly reducing polyketide synthase tazB and the dual enzyme tazHJ catalyze late steps of the pathway, leading to the production of the 2 final stereoisomers that contain additional polyketide modification whose structures have still to be determined. This chain is FAD-dependent monooxygenase tazP, found in Aspergillus terreus (strain NIH 2624 / FGSC A1156).